A 3507-amino-acid polypeptide reads, in one-letter code: Dynein axonemal heavy chain 14 (3507 aa).

The tract at residues 91 to 126 is disordered; that stretch reads PHLPGTQDPLRRVRDPTPIVASSPGRRRGSWSGGYG. A coiled-coil region spans residues 354–381; that stretch reads DEFCEEQLQQATQALKQLEDIRNKAISE. The GPAGTGKT motif signature appears at 1164 to 1171; that stretch reads GPAGTGKT. ATP is bound by residues 1164–1171 and 1427–1434; these read GPAGTGKT and GPTGGGKT. The N-linked (GlcNAc...) asparagine glycan is linked to N1818.

The protein belongs to the dynein heavy chain family. As to quaternary structure, consists of at least two heavy chains and a number of intermediate and light chains.

The protein resides in the cytoplasm. It localises to the cytoskeleton. Its subcellular location is the cilium axoneme. Functionally, force generating protein of respiratory cilia. Produces force towards the minus ends of microtubules. Dynein has ATPase activity; the force-producing power stroke is thought to occur on release of ADP. Involved in sperm motility; implicated in sperm flagellar assembly. The sequence is that of Dynein axonemal heavy chain 14 (DNAH14) from Homo sapiens (Human).